Consider the following 248-residue polypeptide: Tyrosine recombinase XerD-like (248 aa).

The Core-binding (CB) domain maps to methionine 1 to tyrosine 72. A Tyr recombinase domain is found at aspartate 85–serine 248. Catalysis depends on residues lysine 149 and arginine 213. The active-site O-(3'-phospho-DNA)-tyrosine intermediate is tyrosine 245.

The protein belongs to the 'phage' integrase family. XerD-like subfamily.

Its subcellular location is the cytoplasm. Its function is as follows. Putative tyrosine recombinase. Not involved in the cutting and rejoining of the recombining DNA molecules on dif(SL) site. This chain is Tyrosine recombinase XerD-like, found in Streptococcus pyogenes serotype M18 (strain MGAS8232).